The primary structure comprises 353 residues: Dihydroorotate dehydrogenase (quinone) (353 aa).

FMN is bound by residues 67–71 and T91; that span reads AGFDK. Residue K71 participates in substrate binding. 116 to 120 serves as a coordination point for substrate; it reads NRMGF. 2 residues coordinate FMN: N144 and N177. Residue N177 coordinates substrate. S180 (nucleophile) is an active-site residue. Residue N182 coordinates substrate. 2 residues coordinate FMN: K215 and T243. Position 244 to 245 (244 to 245) interacts with substrate; it reads NT. FMN contacts are provided by residues G264, G293, and 314–315; that span reads YT.

It belongs to the dihydroorotate dehydrogenase family. Type 2 subfamily. In terms of assembly, monomer. FMN is required as a cofactor.

The protein resides in the cell membrane. The catalysed reaction is (S)-dihydroorotate + a quinone = orotate + a quinol. The protein operates within pyrimidine metabolism; UMP biosynthesis via de novo pathway; orotate from (S)-dihydroorotate (quinone route): step 1/1. Catalyzes the conversion of dihydroorotate to orotate with quinone as electron acceptor. This is Dihydroorotate dehydrogenase (quinone) from Gloeobacter violaceus (strain ATCC 29082 / PCC 7421).